The primary structure comprises 278 residues: Large ribosomal subunit protein uL2c (278 aa).

Residues 224-256 are disordered; it reads NPVDHPHGGGEGRAPIGRKKPTTPWGYPALGRK.

It belongs to the universal ribosomal protein uL2 family. Part of the 50S ribosomal subunit.

It localises to the plastid. The polypeptide is Large ribosomal subunit protein uL2c (rpl2) (Cuscuta exaltata (Tall dodder)).